A 235-amino-acid polypeptide reads, in one-letter code: UPF0758 protein A1S_2918 (235 aa).

The tract at residues 1-20 is disordered; sequence MNTSIKNWPEQERPRERLLQ. The segment covering 9–18 has biased composition (basic and acidic residues); sequence PEQERPRERL. In terms of domain architecture, MPN spans 105 to 227; that stretch reads SLHSSHLVLD…SFSFAEQQLL (123 aa). Zn(2+) contacts are provided by H176, H178, and D189. Positions 176–189 match the JAMM motif motif; that stretch reads HNHPFGSPQPSPED.

The protein belongs to the UPF0758 family.

In Acinetobacter baumannii (strain ATCC 17978 / DSM 105126 / CIP 53.77 / LMG 1025 / NCDC KC755 / 5377), this protein is UPF0758 protein A1S_2918.